The chain runs to 224 residues: Urease accessory protein UreF (224 aa).

The protein belongs to the UreF family. As to quaternary structure, ureD, UreF and UreG form a complex that acts as a GTP-hydrolysis-dependent molecular chaperone, activating the urease apoprotein by helping to assemble the nickel containing metallocenter of UreC. The UreE protein probably delivers the nickel.

It localises to the cytoplasm. Required for maturation of urease via the functional incorporation of the urease nickel metallocenter. This is Urease accessory protein UreF from Nitrosococcus oceani (strain ATCC 19707 / BCRC 17464 / JCM 30415 / NCIMB 11848 / C-107).